The primary structure comprises 694 residues: Elongation factor G 2 (694 aa).

One can recognise a tr-type G domain in the interval 6–282 (SKLRNIGISA…GVVDYLPDPT (277 aa)). GTP contacts are provided by residues 15-22 (AHIDSGKT), 82-86 (DTPGH), and 136-139 (NKCD).

It belongs to the TRAFAC class translation factor GTPase superfamily. Classic translation factor GTPase family. EF-G/EF-2 subfamily.

It is found in the cytoplasm. In terms of biological role, catalyzes the GTP-dependent ribosomal translocation step during translation elongation. During this step, the ribosome changes from the pre-translocational (PRE) to the post-translocational (POST) state as the newly formed A-site-bound peptidyl-tRNA and P-site-bound deacylated tRNA move to the P and E sites, respectively. Catalyzes the coordinated movement of the two tRNA molecules, the mRNA and conformational changes in the ribosome. This Anaeromyxobacter dehalogenans (strain 2CP-C) protein is Elongation factor G 2.